Reading from the N-terminus, the 492-residue chain is Serine carboxypeptidase-like 31 (492 aa).

The N-terminal stretch at 1–30 (MDNYQTKNISNLLTSLCFTTLLILAPVVIC) is a signal peptide. Cystine bridges form between Cys-105-Cys-376, Cys-270-Cys-283, and Cys-307-Cys-344. N-linked (GlcNAc...) asparagine glycosylation occurs at Asn-156. Ser-198 is an active-site residue. Asn-221 and Asn-271 each carry an N-linked (GlcNAc...) asparagine glycan. N-linked (GlcNAc...) asparagine glycosylation is found at Asn-372 and Asn-383. Catalysis depends on residues Asp-413 and His-465.

It belongs to the peptidase S10 family. As to expression, expressed in roots, senescent leaves, stems, flowers and siliques.

Its subcellular location is the secreted. Probable carboxypeptidase. The protein is Serine carboxypeptidase-like 31 (SCPL31) of Arabidopsis thaliana (Mouse-ear cress).